Here is a 184-residue protein sequence, read N- to C-terminus: ATP synthase subunit b, chloroplastic (184 aa).

A helical membrane pass occupies residues 4–24 (IINLVIFSGYWPIAGNFGLNT).

It belongs to the ATPase B chain family. In terms of assembly, F-type ATPases have 2 components, F(1) - the catalytic core - and F(0) - the membrane proton channel. F(1) has five subunits: alpha(3), beta(3), gamma(1), delta(1), epsilon(1). F(0) has four main subunits: a(1), b(1), b'(1) and c(10-14). The alpha and beta chains form an alternating ring which encloses part of the gamma chain. F(1) is attached to F(0) by a central stalk formed by the gamma and epsilon chains, while a peripheral stalk is formed by the delta, b and b' chains.

Its subcellular location is the plastid. The protein localises to the chloroplast thylakoid membrane. In terms of biological role, f(1)F(0) ATP synthase produces ATP from ADP in the presence of a proton or sodium gradient. F-type ATPases consist of two structural domains, F(1) containing the extramembraneous catalytic core and F(0) containing the membrane proton channel, linked together by a central stalk and a peripheral stalk. During catalysis, ATP synthesis in the catalytic domain of F(1) is coupled via a rotary mechanism of the central stalk subunits to proton translocation. Functionally, component of the F(0) channel, it forms part of the peripheral stalk, linking F(1) to F(0). This Physcomitrium patens (Spreading-leaved earth moss) protein is ATP synthase subunit b, chloroplastic.